The following is a 427-amino-acid chain: Methylenetetrahydrofolate--tRNA-(uracil-5-)-methyltransferase TrmFO (427 aa).

6 to 11 serves as a coordination point for FAD; it reads GAGLAG.

It belongs to the MnmG family. TrmFO subfamily. It depends on FAD as a cofactor.

It is found in the cytoplasm. The catalysed reaction is uridine(54) in tRNA + (6R)-5,10-methylene-5,6,7,8-tetrahydrofolate + NADH + H(+) = 5-methyluridine(54) in tRNA + (6S)-5,6,7,8-tetrahydrofolate + NAD(+). It carries out the reaction uridine(54) in tRNA + (6R)-5,10-methylene-5,6,7,8-tetrahydrofolate + NADPH + H(+) = 5-methyluridine(54) in tRNA + (6S)-5,6,7,8-tetrahydrofolate + NADP(+). In terms of biological role, catalyzes the folate-dependent formation of 5-methyl-uridine at position 54 (M-5-U54) in all tRNAs. The polypeptide is Methylenetetrahydrofolate--tRNA-(uracil-5-)-methyltransferase TrmFO (Acholeplasma laidlawii (strain PG-8A)).